A 131-amino-acid polypeptide reads, in one-letter code: Ribonuclease P protein component (131 aa).

This sequence belongs to the RnpA family. In terms of assembly, consists of a catalytic RNA component (M1 or rnpB) and a protein subunit.

It catalyses the reaction Endonucleolytic cleavage of RNA, removing 5'-extranucleotides from tRNA precursor.. Functionally, RNaseP catalyzes the removal of the 5'-leader sequence from pre-tRNA to produce the mature 5'-terminus. It can also cleave other RNA substrates such as 4.5S RNA. The protein component plays an auxiliary but essential role in vivo by binding to the 5'-leader sequence and broadening the substrate specificity of the ribozyme. In Stutzerimonas stutzeri (strain A1501) (Pseudomonas stutzeri), this protein is Ribonuclease P protein component.